The following is a 1040-amino-acid chain: Nucleotide-binding oligomerization domain-containing protein 2 (1040 aa).

CARD domains are found at residues 26–122 and 126–218; these read CEMC…LHGC and HSLH…EAAT. Residues 63–77 carry the ATG16L1-binding motif motif; the sequence is WEVLSWEDYEGFHLL. ADP contacts are provided by threonine 239, tyrosine 252, threonine 253, glycine 302, serine 303, glycine 304, lysine 305, serine 306, and threonine 307. Residues 241 to 274 are required for CARD9 binding; that stretch reads DGAETLCLEDIYTENVLEVWADVGTAGPPPKSPA. One can recognise an NACHT domain in the interval 293–618; the sequence is DTVLVVGEAG…FFAAFYLALS (326 aa). 299–306 is a binding site for ATP; the sequence is GEAGSGKS. The S-palmitoyl cysteine moiety is linked to residue cysteine 395. Histidine 603 serves as a coordination point for ADP. 9 LRR repeats span residues 791 to 812, 816 to 839, 844 to 865, 872 to 884, 900 to 920, 928 to 949, 956 to 976, 984 to 1005, and 1012 to 1032; these read RPVA…QLLP, VCKA…IECA, QLQK…SMAK, NFLA…NHIT, SLQF…QALA, SLRW…ALAL, MLEE…CSLA, SLKI…ALLQ, and TILE…DKLG. Cysteine 1033 carries the S-palmitoyl cysteine lipid modification.

It belongs to the NOD1-NOD2 family. As to quaternary structure, homooligomer: homooligomerizes following muramyl dipeptide (MDP)-binding, promoting RIPK2 recruitment. Interacts (via CARD domain) with RIPK2 (via CARD domain). Following RIPK2 recruitment, RIPK2 homooligomerizes via its CARD domain and forms long filaments named RIPosomes. Interacts (via CARD domain) with ubiquitin; inhibiting interaction with RIPK2. Component of a signaling complex consisting of ARHGEF2, NOD2 and RIPK2. Interacts with ANKRD17 (via N-terminus). Interacts with HSPA1A; the interaction enhances NOD2 stability. Interacts (via both CARD domains) with HSP90; the interaction enhances NOD2 stability. Interacts (via CARD domain) with SOCS3; the interaction promotes NOD2 degradation. Interacts (via CARD domain) with ERBIN; the interaction inhibits activation of NOD2. Interacts with MAPKBP1; the interaction is enhanced in the presence of muramyl dipeptide (MDP) and inhibits NOD2 homooligomerization and activation. Interacts with INAVA; the interaction takes place upon Pattern recognition receptor (PRR) stimulation. Interacts (via NACHT domain) with CARD9. Interacts (via CARD domain) with CASP1; this interaction leads to IL1B processing. Also interacts with CASP4. Interacts with NLRP1; this interaction is enhanced in the presence of muramyl dipeptide (MDP) and leads to increased IL1B release. Interacts with NLRP12; this interaction promotes degradation of NOD2 through the ubiquitin-proteasome pathway. Interacts with ANKHD1, C10orf67, CHMP5, DOCK7, ENTR1, KRT15, LDOC1, PPP1R12C, PPP2R3B, TRIM41 and VIM. Interacts with MAVS; interaction takes place following single-stranded RNA (ssRNA)-binding. Interacts with ATG16L1. Interacts with IRGM; promoting IRGM 'Lys-63'-linked polyubiquitination, which is required for interactions with the core autophagy factors. In terms of processing, palmitoylated by ZDHHC5; palmitoylation is required for proper recruitment to the bacterial entry site and hence for proper signaling upon cognate peptidoglycan detection. Palmitoylation promotes localization to the cell membrane. Palmitoylation protects from SQSTM1/p62-dependent autophagic degradation. Polyubiquitinated by TRIM27, leading to proteasome-mediated degradation. Polyubiquitinated and degraded following muramyl dipeptide (MDP) stimulation, conferring MDP tolerance and preventing septic shock. Post-translationally, degraded via selective autophagy following interaction with IRGM. IRGM promotes NOD2-RIPK2 RIPosome recruitment to autophagosome membranes, promoting their SQSTM1/p62-dependent autophagic degradation. In terms of processing, O-glycosylated by OGT, O-GlcNAcylation increases protein stability.

It localises to the cell membrane. The protein localises to the basolateral cell membrane. It is found in the cytoplasm. The protein resides in the mitochondrion. With respect to regulation, ADP-binding promotes an inactive closed conformation. Functionally, pattern recognition receptor (PRR) that detects bacterial peptidoglycan fragments and other danger signals and plays an important role in gastrointestinal immunity. Specifically activated by muramyl dipeptide (MDP), a fragment of bacterial peptidoglycan found in every bacterial peptidoglycan type. NOD2 specifically recognizes and binds 6-O-phospho-MDP, the phosphorylated form of MDP, which is generated by NAGK. 6-O-phospho-MDP-binding triggers oligomerization that facilitates the binding and subsequent activation of the proximal adapter receptor-interacting RIPK2. Following recruitment, RIPK2 undergoes 'Met-1'- (linear) and 'Lys-63'-linked polyubiquitination by E3 ubiquitin-protein ligases XIAP, BIRC2, BIRC3 and the LUBAC complex, becoming a scaffolding protein for downstream effectors, triggering activation of the NF-kappa-B and MAP kinases signaling. This in turn leads to the transcriptional activation of hundreds of genes involved in immune response. Its ability to detect bacterial MDP plays a central role in maintaining the equilibrium between intestinal microbiota and host immune responses to control inflammation. An imbalance in this relationship results in dysbiosis, whereby pathogenic bacteria prevail on commensals, causing damage in the intestinal epithelial barrier as well as allowing bacterial invasion and inflammation. Acts as a regulator of appetite by sensing MDP in a subset of brain neurons: microbiota-derived MDP reach the brain, where they bind and activate NOD2 in inhibitory hypothalamic neurons, decreasing neuronal activity, thereby regulating satiety and body temperature. NOD2-dependent MDP-sensing of bacterial cell walls in the intestinal epithelial compartment contributes to sustained postnatal growth upon undernutrition. Also plays a role in antiviral response by acting as a sensor of single-stranded RNA (ssRNA) from viruses: upon ssRNA-binding, interacts with MAVS, leading to activation of interferon regulatory factor-3/IRF3 and expression of type I interferon. Also acts as a regulator of autophagy in dendritic cells via its interaction with ATG16L1, possibly by recruiting ATG16L1 at the site of bacterial entry. NOD2 activation in the small intestine crypt also contributes to intestinal stem cells survival and function: acts by promoting mitophagy via its association with ATG16L1. In addition to its main role in innate immunity, also regulates the adaptive immune system by acting as regulator of helper T-cell and regulatory T-cells (Tregs). Besides recognizing pathogens, also involved in the endoplasmic reticulum stress response: acts by sensing and binding to the cytosolic metabolite sphingosine-1-phosphate generated in response to endoplasmic reticulum stress, initiating an inflammation process that leads to activation of the NF-kappa-B and MAP kinases signaling. May also be involved in NLRP1 activation following activation by MDP, leading to CASP1 activation and IL1B release in macrophages. The sequence is that of Nucleotide-binding oligomerization domain-containing protein 2 (NOD2) from Hylobates lar (Lar gibbon).